The sequence spans 341 residues: Glycerol-3-phosphate dehydrogenase [NAD(P)+] (341 aa).

NADPH contacts are provided by S15, W16, R36, and K110. Residues K110, G139, and S141 each contribute to the sn-glycerol 3-phosphate site. A143 contacts NADPH. Sn-glycerol 3-phosphate is bound by residues K194, D247, S257, R258, and N259. K194 (proton acceptor) is an active-site residue. R258 lines the NADPH pocket. Residues V282 and E284 each contribute to the NADPH site.

The protein belongs to the NAD-dependent glycerol-3-phosphate dehydrogenase family.

Its subcellular location is the cytoplasm. It carries out the reaction sn-glycerol 3-phosphate + NAD(+) = dihydroxyacetone phosphate + NADH + H(+). The enzyme catalyses sn-glycerol 3-phosphate + NADP(+) = dihydroxyacetone phosphate + NADPH + H(+). It participates in membrane lipid metabolism; glycerophospholipid metabolism. Its function is as follows. Catalyzes the reduction of the glycolytic intermediate dihydroxyacetone phosphate (DHAP) to sn-glycerol 3-phosphate (G3P), the key precursor for phospholipid synthesis. The protein is Glycerol-3-phosphate dehydrogenase [NAD(P)+] of Stenotrophomonas maltophilia (strain K279a).